The chain runs to 433 residues: UDP-N-acetylmuramate--L-alanine ligase (433 aa).

108–114 (GAHGKTS) is a binding site for ATP.

It belongs to the MurCDEF family.

It is found in the cytoplasm. The enzyme catalyses UDP-N-acetyl-alpha-D-muramate + L-alanine + ATP = UDP-N-acetyl-alpha-D-muramoyl-L-alanine + ADP + phosphate + H(+). Its pathway is cell wall biogenesis; peptidoglycan biosynthesis. Functionally, cell wall formation. This Anoxybacillus flavithermus (strain DSM 21510 / WK1) protein is UDP-N-acetylmuramate--L-alanine ligase.